We begin with the raw amino-acid sequence, 308 residues long: MPKYTLYYFNSRGRAEICRMLFAAANIPYNDVRIDYSEWDIYRSKMPGSCLPVLEINDSIQIPQTMAIARYLARQFGFYGKHHLDMARVDFICDSFYDIFNDYMRMYHDQKGRVMFELMSQMREWYAARNENSGYEECYMQPSMAPSAQMSQEVDNSDTLADCSEMRSQDSMVEPPSQKLSPELESQSSLCSERPQCGPPDPMMGSDFERLSFNEGRMLEMRRRYDETCRRVLPFLEGTLKQRYGGDRYFMGEYMTMCDLMCYCALENPLLDNAYLLHPYPKLRGLRDRVSRNQRINSYFTLRNYTDF.

The GST N-terminal domain maps to P2–G80. A disordered region spans residues E165 to G205. The span at Q178 to C191 shows a compositional bias: polar residues. In terms of domain architecture, GST C-terminal spans E185–F308.

This sequence belongs to the GST superfamily. As to expression, lens.

Functionally, S-crystallins are structural components of squids and octopi eye lens. Contains relatively little if any GST activity. This Nototodarus sloanii (Wellington flying squid) protein is S-crystallin SL18.